Consider the following 258-residue polypeptide: Imidazole glycerol phosphate synthase subunit HisF (258 aa).

Residues aspartate 11 and aspartate 130 contribute to the active site.

It belongs to the HisA/HisF family. As to quaternary structure, heterodimer of HisH and HisF.

It localises to the cytoplasm. It carries out the reaction 5-[(5-phospho-1-deoxy-D-ribulos-1-ylimino)methylamino]-1-(5-phospho-beta-D-ribosyl)imidazole-4-carboxamide + L-glutamine = D-erythro-1-(imidazol-4-yl)glycerol 3-phosphate + 5-amino-1-(5-phospho-beta-D-ribosyl)imidazole-4-carboxamide + L-glutamate + H(+). Its pathway is amino-acid biosynthesis; L-histidine biosynthesis; L-histidine from 5-phospho-alpha-D-ribose 1-diphosphate: step 5/9. Its function is as follows. IGPS catalyzes the conversion of PRFAR and glutamine to IGP, AICAR and glutamate. The HisF subunit catalyzes the cyclization activity that produces IGP and AICAR from PRFAR using the ammonia provided by the HisH subunit. In Methylorubrum populi (strain ATCC BAA-705 / NCIMB 13946 / BJ001) (Methylobacterium populi), this protein is Imidazole glycerol phosphate synthase subunit HisF.